A 348-amino-acid polypeptide reads, in one-letter code: PDZ and LIM domain protein 2 (348 aa).

One can recognise a PDZ domain in the interval 1-84 (MALTVDVVGP…PLRLQLDRPQ (84 aa)). The tract at residues 67 to 139 (SKIRQSPSPL…PPTSPQAPTG (73 aa)) is disordered. A compositionally biased stretch (polar residues) spans 103 to 118 (RFQSSRRTHTDSQASL). Ser-117, Ser-119, and Ser-124 each carry phosphoserine. Phosphothreonine occurs at positions 128 and 132. 8 positions are modified to phosphoserine: Ser-133, Ser-153, Ser-191, Ser-197, Ser-198, Ser-202, Ser-209, and Ser-262. Positions 165 to 202 (GGRRGSRQASLSPAGDSAVLVLPPPPSPGARSSSSRLS) are disordered. A compositionally biased stretch (low complexity) spans 193–202 (GARSSSSRLS). The segment at 249–275 (ERGGTPAYLPSSLSPQSSLPTSRALAS) is disordered. Positions 257–270 (LPSSLSPQSSLPTS) are enriched in low complexity. Positions 280 to 340 (HTCEKCNTSI…EKHARQRYSA (61 aa)) constitute an LIM zinc-binding domain.

In terms of assembly, interacts with alpha-actinins ACTN1 and ACTN4, FLNA and MYH9. Interacts (via LIM zinc-binding domain) with MKRN2.

The protein resides in the cytoplasm. It localises to the cytoskeleton. Functionally, probable adapter protein located at the actin cytoskeleton that promotes cell attachment. Necessary for the migratory capacity of epithelial cells. Overexpression enhances cell adhesion to collagen and fibronectin and suppresses anchorage independent growth. May contribute to tumor cell migratory capacity. The chain is PDZ and LIM domain protein 2 (PDLIM2) from Bos taurus (Bovine).